We begin with the raw amino-acid sequence, 722 residues long: Polyribonucleotide nucleotidyltransferase (722 aa).

The Mg(2+) site is built by Asp495 and Asp501. The KH domain occupies 562 to 621 (PRLLSFRIDPELIGTVIGPGGRTIKGITERTNTKIDIEDGGIVTIASHDGVAAEEAQKII). The region spanning 631–699 (GEVFTGSITR…NRGRINLTLR (69 aa)) is the S1 motif domain.

It belongs to the polyribonucleotide nucleotidyltransferase family. Mg(2+) is required as a cofactor.

The protein localises to the cytoplasm. The catalysed reaction is RNA(n+1) + phosphate = RNA(n) + a ribonucleoside 5'-diphosphate. In terms of biological role, involved in mRNA degradation. Catalyzes the phosphorolysis of single-stranded polyribonucleotides processively in the 3'- to 5'-direction. This is Polyribonucleotide nucleotidyltransferase from Prochlorococcus marinus (strain SARG / CCMP1375 / SS120).